Here is a 206-residue protein sequence, read N- to C-terminus: Large ribosomal subunit protein uL4 (206 aa).

Over residues 66–77 (QKGTGRARHHSA) the composition is skewed to basic residues. Positions 66-96 (QKGTGRARHHSARAPQFRGGGQAHGPVVRSH) are disordered.

Belongs to the universal ribosomal protein uL4 family. In terms of assembly, part of the 50S ribosomal subunit.

Its function is as follows. One of the primary rRNA binding proteins, this protein initially binds near the 5'-end of the 23S rRNA. It is important during the early stages of 50S assembly. It makes multiple contacts with different domains of the 23S rRNA in the assembled 50S subunit and ribosome. Forms part of the polypeptide exit tunnel. This Brucella anthropi (strain ATCC 49188 / DSM 6882 / CCUG 24695 / JCM 21032 / LMG 3331 / NBRC 15819 / NCTC 12168 / Alc 37) (Ochrobactrum anthropi) protein is Large ribosomal subunit protein uL4.